The chain runs to 417 residues: DLTYYTPEYQTKDTDILAAFRMTPQPGVPAEEAGAAVAAESSTGTWTTVWTDGLTTLDRYKGRCYDIEPVPGEENQYIAYVAYPLDLFEEGSVTNMFTSIVGNVFGFKALRALRLEDLRIPPAYPKTFIGPPHGIQVERDKLNKYGRPLLGCTIKPKLGLSAKNYGRAVYECLRGGLDFTKDDENVNSQPFMRWRDRFLFVAEALFKALAETGEIKGHYLNATAGTSEEMMKRARFARELGAPIVMHDYLTGGFTANTSLAFYCRDNGLLLHIHRAMHAVIDRQRNHGMHFRVLAKALRMSGGDHIHAGTVVGKLEGEREVTLGFVDLLRDDYIEKDRSRGIYFTQDWVSMPGVIPVASGGIHVWHMPALTEIFGDDAVLQFCGGTLGHPWGNAPGAVANRVALEACVQARNEGRDL.

Residues Asn103 and Thr153 each coordinate substrate. Lys155 serves as the catalytic Proton acceptor. Lys157 lines the substrate pocket. Residues Lys181, Asp183, and Glu184 each contribute to the Mg(2+) site. Lys181 is subject to N6-carboxylysine. His274 (proton acceptor) is an active-site residue. Substrate is bound by residues Arg275, His307, and Ser359.

The protein belongs to the RuBisCO large chain family. Type I subfamily. As to quaternary structure, heterohexadecamer of 8 large chains and 8 small chains. Mg(2+) is required as a cofactor.

It localises to the plastid. Its subcellular location is the chloroplast. It catalyses the reaction 2 (2R)-3-phosphoglycerate + 2 H(+) = D-ribulose 1,5-bisphosphate + CO2 + H2O. The enzyme catalyses D-ribulose 1,5-bisphosphate + O2 = 2-phosphoglycolate + (2R)-3-phosphoglycerate + 2 H(+). In terms of biological role, ruBisCO catalyzes two reactions: the carboxylation of D-ribulose 1,5-bisphosphate, the primary event in carbon dioxide fixation, as well as the oxidative fragmentation of the pentose substrate in the photorespiration process. Both reactions occur simultaneously and in competition at the same active site. In Acrostichum aureum (Golden leather fern), this protein is Ribulose bisphosphate carboxylase large chain.